We begin with the raw amino-acid sequence, 213 residues long: Pyridoxine/pyridoxamine 5'-phosphate oxidase (213 aa).

Substrate is bound by residues 9–12 (RLEY) and lysine 67. FMN-binding positions include 62–67 (RIVLLK), 77–78 (YT), arginine 83, lysine 84, and glutamine 106. Substrate-binding residues include tyrosine 124, arginine 128, and serine 132. Residues 141–142 (QS) and tryptophan 185 each bind FMN. 191-193 (RLH) is a substrate binding site. Arginine 195 provides a ligand contact to FMN.

The protein belongs to the pyridoxamine 5'-phosphate oxidase family. As to quaternary structure, homodimer. It depends on FMN as a cofactor.

It carries out the reaction pyridoxamine 5'-phosphate + O2 + H2O = pyridoxal 5'-phosphate + H2O2 + NH4(+). The enzyme catalyses pyridoxine 5'-phosphate + O2 = pyridoxal 5'-phosphate + H2O2. Its pathway is cofactor metabolism; pyridoxal 5'-phosphate salvage; pyridoxal 5'-phosphate from pyridoxamine 5'-phosphate: step 1/1. It participates in cofactor metabolism; pyridoxal 5'-phosphate salvage; pyridoxal 5'-phosphate from pyridoxine 5'-phosphate: step 1/1. Functionally, catalyzes the oxidation of either pyridoxine 5'-phosphate (PNP) or pyridoxamine 5'-phosphate (PMP) into pyridoxal 5'-phosphate (PLP). The polypeptide is Pyridoxine/pyridoxamine 5'-phosphate oxidase (Chromobacterium violaceum (strain ATCC 12472 / DSM 30191 / JCM 1249 / CCUG 213 / NBRC 12614 / NCIMB 9131 / NCTC 9757 / MK)).